Reading from the N-terminus, the 372-residue chain is Aminomethyltransferase (372 aa).

This sequence belongs to the GcvT family. In terms of assembly, the glycine cleavage system is composed of four proteins: P, T, L and H.

The catalysed reaction is N(6)-[(R)-S(8)-aminomethyldihydrolipoyl]-L-lysyl-[protein] + (6S)-5,6,7,8-tetrahydrofolate = N(6)-[(R)-dihydrolipoyl]-L-lysyl-[protein] + (6R)-5,10-methylene-5,6,7,8-tetrahydrofolate + NH4(+). In terms of biological role, the glycine cleavage system catalyzes the degradation of glycine. The polypeptide is Aminomethyltransferase (Burkholderia orbicola (strain MC0-3)).